We begin with the raw amino-acid sequence, 144 residues long: Transcription antitermination protein NusB (144 aa).

Belongs to the NusB family.

In terms of biological role, involved in transcription antitermination. Required for transcription of ribosomal RNA (rRNA) genes. Binds specifically to the boxA antiterminator sequence of the ribosomal RNA (rrn) operons. In Paraburkholderia xenovorans (strain LB400), this protein is Transcription antitermination protein NusB.